A 274-amino-acid polypeptide reads, in one-letter code: Phosphatidylglycerol--prolipoprotein diacylglyceryl transferase (274 aa).

A run of 7 helical transmembrane segments spans residues 22 to 42, 61 to 81, 96 to 116, 125 to 145, 177 to 197, 204 to 224, and 238 to 258; these read LSVR…MWLA, LLFY…VLFY, IWTG…AMVW, FFTV…VGRI, SQLY…NLFW, GAIS…VEFV, and ISMG…MIWV. Arginine 144 is an a 1,2-diacyl-sn-glycero-3-phospho-(1'-sn-glycerol) binding site.

This sequence belongs to the Lgt family.

The protein localises to the cell inner membrane. The catalysed reaction is L-cysteinyl-[prolipoprotein] + a 1,2-diacyl-sn-glycero-3-phospho-(1'-sn-glycerol) = an S-1,2-diacyl-sn-glyceryl-L-cysteinyl-[prolipoprotein] + sn-glycerol 1-phosphate + H(+). Its pathway is protein modification; lipoprotein biosynthesis (diacylglyceryl transfer). Functionally, catalyzes the transfer of the diacylglyceryl group from phosphatidylglycerol to the sulfhydryl group of the N-terminal cysteine of a prolipoprotein, the first step in the formation of mature lipoproteins. The polypeptide is Phosphatidylglycerol--prolipoprotein diacylglyceryl transferase (Aeromonas hydrophila subsp. hydrophila (strain ATCC 7966 / DSM 30187 / BCRC 13018 / CCUG 14551 / JCM 1027 / KCTC 2358 / NCIMB 9240 / NCTC 8049)).